Consider the following 93-residue polypeptide: UPF0369 protein RC0209 (93 aa).

Residues 1-24 (MDDKKDNRHLSKPAYREECTGDTE) form a disordered region. The 48-residue stretch at 8-55 (RHLSKPAYREECTGDTERSTTAYMDILEDVSTGSTSKLPLEAKFVKIS) folds into the RPE1 insert domain.

This sequence belongs to the SDHAF4 family.

The polypeptide is UPF0369 protein RC0209 (Rickettsia conorii (strain ATCC VR-613 / Malish 7)).